Here is a 149-residue protein sequence, read N- to C-terminus: Large ribosomal subunit protein uL13 (149 aa).

Belongs to the universal ribosomal protein uL13 family. Part of the 50S ribosomal subunit.

In terms of biological role, this protein is one of the early assembly proteins of the 50S ribosomal subunit, although it is not seen to bind rRNA by itself. It is important during the early stages of 50S assembly. The polypeptide is Large ribosomal subunit protein uL13 (Chlorobium phaeobacteroides (strain DSM 266 / SMG 266 / 2430)).